We begin with the raw amino-acid sequence, 403 residues long: Protein LAZ1 homolog 2 (403 aa).

The next 6 membrane-spanning stretches (helical) occupy residues 16-36 (SLII…YSIL), 50-70 (WIVS…ISLS), 162-182 (MILK…GVYG), 191-211 (GYPY…FCLV), 236-256 (IVFA…YGIL), and 269-289 (FLIC…FPAE). Positions 381–403 (SDGKEETEVTEEVTVETSVPPKE) are disordered.

Belongs to the TMEM184 family.

The protein localises to the membrane. This is Protein LAZ1 homolog 2 from Arabidopsis thaliana (Mouse-ear cress).